The sequence spans 505 residues: Acetylcholine receptor subunit beta (505 aa).

The N-terminal stretch at Met1–Gly24 is a signal peptide. Residues Ser25–Lys245 are Extracellular-facing. A disulfide bond links Cys152 and Cys166. Asn165 carries N-linked (GlcNAc...) asparagine glycosylation. A run of 3 helical transmembrane segments spans residues Pro246–Leu270, Met278–Leu295, and Tyr312–Leu333. At His334 to Arg473 the chain is on the cytoplasmic side. Residues Lys365–Thr391 form a disordered region. Position 394 is a phosphotyrosine; by Tyr-kinases (Tyr394). Residues Leu474 to Leu492 form a helical membrane-spanning segment.

The protein belongs to the ligand-gated ion channel (TC 1.A.9) family. Acetylcholine receptor (TC 1.A.9.1) subfamily. Beta-1/CHRNB1 sub-subfamily. In terms of assembly, pentamer of two alpha chains, and one each of the beta, delta, and gamma (in immature muscle) or epsilon (in mature muscle) chains. The muscle heteropentamer composed of alpha-1, beta-1, delta, epsilon subunits interacts with the alpha-conotoxin ImII.

The protein localises to the postsynaptic cell membrane. It localises to the cell membrane. The enzyme catalyses K(+)(in) = K(+)(out). It catalyses the reaction Na(+)(in) = Na(+)(out). In terms of biological role, after binding acetylcholine, the AChR responds by an extensive change in conformation that affects all subunits and leads to opening of an ion-conducting channel across the plasma membrane. This is Acetylcholine receptor subunit beta (CHRNB1) from Bos taurus (Bovine).